The sequence spans 464 residues: Kynureninase 2 (464 aa).

Pyridoxal 5'-phosphate is bound by residues Leu-135, Thr-136, 163–166 (FPSD), Asp-248, His-251, and Tyr-273. Residue Lys-274 is modified to N6-(pyridoxal phosphate)lysine. Pyridoxal 5'-phosphate contacts are provided by Trp-313 and Asn-341.

This sequence belongs to the kynureninase family. As to quaternary structure, homodimer. Requires pyridoxal 5'-phosphate as cofactor.

The protein resides in the cytoplasm. It carries out the reaction L-kynurenine + H2O = anthranilate + L-alanine + H(+). The catalysed reaction is 3-hydroxy-L-kynurenine + H2O = 3-hydroxyanthranilate + L-alanine + H(+). It participates in amino-acid degradation; L-kynurenine degradation; L-alanine and anthranilate from L-kynurenine: step 1/1. Its pathway is cofactor biosynthesis; NAD(+) biosynthesis; quinolinate from L-kynurenine: step 2/3. Catalyzes the cleavage of L-kynurenine (L-Kyn) and L-3-hydroxykynurenine (L-3OHKyn) into anthranilic acid (AA) and 3-hydroxyanthranilic acid (3-OHAA), respectively. This chain is Kynureninase 2 (bna5-2), found in Aspergillus clavatus (strain ATCC 1007 / CBS 513.65 / DSM 816 / NCTC 3887 / NRRL 1 / QM 1276 / 107).